The sequence spans 305 residues: MSKKLTFQEIILTLQQYWNDQGCMLMQAYDNEKGAGTMSPYTFLRAIGPEPWNAAYVEPSRRPADGRYGENPNRLYQHHQFQVVMKPSPSNIQELYLQSLELLGINALEHDIRFVEDNWENPSTGSAGLGWEVWLDGMEITQFTYFQQVGGLATQPVTAEVTYGLERLASYIQEVDSVYDIEWAPGVKYGEIFRQPEYEHSKYSFEISNQEMLLENFEKFEAEAKRCLEGSLVHPAYDYILKCSHTFNLLDARGAVSVTERAGYIARIRNLARVAAKTFVAERRRLGYPLLDEMTREKLLAEEEA.

This sequence belongs to the class-II aminoacyl-tRNA synthetase family. Tetramer of two alpha and two beta subunits.

It localises to the cytoplasm. The enzyme catalyses tRNA(Gly) + glycine + ATP = glycyl-tRNA(Gly) + AMP + diphosphate. The chain is Glycine--tRNA ligase alpha subunit from Streptococcus mutans serotype c (strain ATCC 700610 / UA159).